The following is a 1515-amino-acid chain: MARLAAALWSLCVTTVLVTSATQGLSRAGLPFGLMRRELACEGYPIELRCPGSDVIMVENANYGRTDDKICDADPFQMENVQCYLPDAFKIMSQRCNNRTQCVVVAGSDAFPDPCPGTYKYLEVQYDCVPYKVEQKVFVCPGTLQKVLEPTSTHESEHQSGAWCKDPLQAGDRIYVMPWIPYRTDTLTEYASWEDYVAARHTTTYRLPNRVDGTGFVVYDGAVFYNKERTRNIVKYDLRTRIKSGETVINTANYHDTSPYRWGGKTDIDLAVDENGLWVIYATEGNNGRLVVSQLNPYTLRFEGTWETGYDKRSASNAFMVCGVLYVLRSVYVDDDSEAAGNRVDYAFNTNANREEPVSLAFPNPYQFVSSVDYNPRDNQLYVWNNYFVVRYSLEFGPPDPSAGPATSPPLSTTTTARPTPLTSTASPAATTPLRRAPLTTHPVGAINQLGPDLPPATAPAPSTRRPPAPNLHVSPELFCEPREVRRVQWPATQQGMLVERPCPKGTRGIASFQCLPALGLWNPRGPDLSNCTSPWVNQVAQKIKSGENAANIASELARHTRGSIYAGDVSSSVKLMEQLLDILDAQLQALRPIERESAGKNYNKMHKRERTCKDYIKAVVETVDNLLRPEALESWKDMNATEQVHTATMLLDVLEEGAFLLADNVREPARFLAAKQNVVLEVTVLSTEGQVQELVFPQEYASESSIQLSANTIKQNSRNGVVKVVFILYNNLGLFLSTENATVKLAGEAGTGGPGGASLVVNSQVIAASINKESSRVFLMDPVIFTVAHLEAKNHFNANCSFWNYSERSMLGYWSTQGCRLVESNKTHTTCACSHLTNFAVLMAHREIYQGRINELLLSVITWVGIVISLVCLAICISTFCFLRGLQTDRNTIHKNLCINLFLAELLFLVGIDKTQYEVACPIFAGLLHYFFLAAFSWLCLEGVHLYLLLVEVFESEYSRTKYYYLGGYCFPALVVGIAAAIDYRSYGTEKACWLRVDNYFIWSFIGPVSFVIVVNLVFLMVTLHKMIRSSSVLKPDSSRLDNIKSWALGAIALLFLLGLTWAFGLLFINKESVVMAYLFTTFNAFQGVFIFVFHCALQKKVHKEYSKCLRHSYCCIRSPPGGAHGSLKTSAMRSNTRYYTGTQVPGQGRHIHQVSLGPRGRSALPESQKDPGGQSGPGDPLTFGLCPSRIRRMWNDTVRKQTESSFMAGDINSTPTLNRGTMGNHLLTNPVLQPRGGTSPYNTLIAESVGFNPSSPPVFNSPGSYREPKHPLGGREACGMDTLPLNGNFNNSYSLRSGDFPPGDGGPEPPRGRNLADAAAFEKMIISELVHNNLRGASGGAKGPPPEPPVPPVPGVSEDEAGGPGGADRAEIELLYKALEEPLLLPRAQSVLYQSDLDESESCTAEDGATSRPLSSPPGRDSLYASGANLRDSPSYPDSSPEGPNEALPPPPPAPPGPPEIYYTSRPPALVARNPLQGYYQVRRPSHEGYLAAPSLEGPGPDGDGQMQLVTSL.

A signal peptide spans 1–24; that stretch reads MARLAAALWSLCVTTVLVTSATQG. Residues 25 to 857 are Extracellular-facing; the sequence is LSRAGLPFGL…EIYQGRINEL (833 aa). The SUEL-type lectin domain maps to 40-129; sequence ACEGYPIELR…KYLEVQYDCV (90 aa). 5 cysteine pairs are disulfide-bonded: cysteine 41–cysteine 71, cysteine 50–cysteine 128, cysteine 83–cysteine 115, cysteine 96–cysteine 102, and cysteine 140–cysteine 322. Position 42 (glutamate 42) interacts with alpha-L-rhamnose. Asparagine 98 carries an N-linked (GlcNAc...) asparagine glycan. 117–120 provides a ligand contact to alpha-L-rhamnose; sequence GTYK. Residues 139–398 form the Olfactomedin-like domain; sequence VCPGTLQKVL…VVRYSLEFGP (260 aa). Positions 400–468 are disordered; sequence DPSAGPATSP…APAPSTRRPP (69 aa). Low complexity predominate over residues 405–441; that stretch reads PATSPPLSTTTTARPTPLTSTASPAATTPLRRAPLTT. The segment covering 453–468 has biased composition (pro residues); sequence DLPPATAPAPSTRRPP. 2 disulfides stabilise this stretch: cysteine 480/cysteine 515 and cysteine 503/cysteine 532. Residues asparagine 531, asparagine 640, asparagine 741, asparagine 800, asparagine 805, and asparagine 826 are each glycosylated (N-linked (GlcNAc...) asparagine). Positions 669–850 constitute a GAIN-B domain; sequence PARFLAAKQN…AVLMAHREIY (182 aa). Intrachain disulfides connect cysteine 801-cysteine 832 and cysteine 820-cysteine 834. Residues 801–850 form a GPS region; it reads CSFWNYSERSMLGYWSTQGCRLVESNKTHTTCACSHLTNFAVLMAHREIY. Residues 858 to 878 traverse the membrane as a helical segment; the sequence is LLSVITWVGIVISLVCLAICI. Residues 879–892 lie on the Cytoplasmic side of the membrane; that stretch reads STFCFLRGLQTDRN. A helical membrane pass occupies residues 893 to 913; that stretch reads TIHKNLCINLFLAELLFLVGI. The Extracellular portion of the chain corresponds to 914 to 919; that stretch reads DKTQYE. A helical transmembrane segment spans residues 920 to 940; that stretch reads VACPIFAGLLHYFFLAAFSWL. The Cytoplasmic portion of the chain corresponds to 941-964; the sequence is CLEGVHLYLLLVEVFESEYSRTKY. The chain crosses the membrane as a helical span at residues 965–985; it reads YYLGGYCFPALVVGIAAAIDY. The Extracellular segment spans residues 986-1001; that stretch reads RSYGTEKACWLRVDNY. A helical membrane pass occupies residues 1002 to 1022; that stretch reads FIWSFIGPVSFVIVVNLVFLM. At 1023–1049 the chain is on the cytoplasmic side; it reads VTLHKMIRSSSVLKPDSSRLDNIKSWA. The helical transmembrane segment at 1050–1070 threads the bilayer; it reads LGAIALLFLLGLTWAFGLLFI. The Extracellular segment spans residues 1071-1074; sequence NKES. A helical membrane pass occupies residues 1075-1095; sequence VVMAYLFTTFNAFQGVFIFVF. Over 1096–1515 the chain is Cytoplasmic; sequence HCALQKKVHK…DGQMQLVTSL (420 aa). A disordered region spans residues 1144-1184; that stretch reads TQVPGQGRHIHQVSLGPRGRSALPESQKDPGGQSGPGDPLT. An Omega-N-methylarginine modification is found at arginine 1237. A Phosphoserine modification is found at serine 1263. 4 disordered regions span residues 1291–1316, 1337–1369, 1401–1470, and 1492–1515; these read FNNSYSLRSGDFPPGDGGPEPPRGRN, RGASGGAKGPPPEPPVPPVPGVSEDEAGGPGGA, ESES…SRPP, and YLAAPSLEGPGPDGDGQMQLVTSL. Composition is skewed to pro residues over residues 1345 to 1356 and 1449 to 1461; these read GPPPEPPVPPVP and ALPPPPPAPPGPP. Residues serine 1497 and serine 1514 each carry the phosphoserine modification.

This sequence belongs to the G-protein coupled receptor 2 family. Adhesion G-protein coupled receptor (ADGR) subfamily. As to quaternary structure, forms a heterodimer, consisting of a large extracellular region (p120) non-covalently linked to a seven-transmembrane moiety (p85). Interacts with syntaxin and with proteins of the SHANK family via the PDZ domain. Isoform 2 interacts with TENM2. Interacts (via extracellular domain) with FLRT1, FLRT2 and FLRT3 (via extracellular domain). In terms of processing, autoproteolytically cleaved into 2 subunits, an extracellular subunit and a seven-transmembrane subunit. This proteolytic processing takes place early in the biosynthetic pathway, either in the endoplasmic reticulum or in the early compartment of the Golgi apparatus. Expressed in the brain (at protein level). Brain specific distribution but low levels are also detected in most tissues.

Its subcellular location is the cell membrane. The protein resides in the cell projection. The protein localises to the axon. It localises to the growth cone. It is found in the synapse. Its subcellular location is the presynaptic cell membrane. The protein resides in the synaptosome. Its function is as follows. Calcium-independent receptor of high affinity for alpha-latrotoxin, an excitatory neurotoxin present in black widow spider venom which triggers massive exocytosis from neurons and neuroendocrine cells. Receptor probably implicated in the regulation of exocytosis. In terms of biological role, receptor for TENM2 that mediates heterophilic synaptic cell-cell contact and postsynaptic specialization. The chain is Adhesion G protein-coupled receptor L1 from Rattus norvegicus (Rat).